Here is a 146-residue protein sequence, read N- to C-terminus: Large ribosomal subunit protein uL11 (146 aa).

This sequence belongs to the universal ribosomal protein uL11 family. In terms of assembly, part of the ribosomal stalk of the 50S ribosomal subunit. Interacts with L10 and the large rRNA to form the base of the stalk. L10 forms an elongated spine to which L12 dimers bind in a sequential fashion forming a multimeric L10(L12)X complex. In terms of processing, one or more lysine residues are methylated.

In terms of biological role, forms part of the ribosomal stalk which helps the ribosome interact with GTP-bound translation factors. The polypeptide is Large ribosomal subunit protein uL11 (Corynebacterium kroppenstedtii (strain DSM 44385 / JCM 11950 / CIP 105744 / CCUG 35717)).